A 330-amino-acid polypeptide reads, in one-letter code: Phosphate acyltransferase (330 aa).

Belongs to the PlsX family. As to quaternary structure, homodimer. Probably interacts with PlsY.

The protein localises to the cytoplasm. The enzyme catalyses a fatty acyl-[ACP] + phosphate = an acyl phosphate + holo-[ACP]. It participates in lipid metabolism; phospholipid metabolism. In terms of biological role, catalyzes the reversible formation of acyl-phosphate (acyl-PO(4)) from acyl-[acyl-carrier-protein] (acyl-ACP). This enzyme utilizes acyl-ACP as fatty acyl donor, but not acyl-CoA. This is Phosphate acyltransferase from Carboxydothermus hydrogenoformans (strain ATCC BAA-161 / DSM 6008 / Z-2901).